The chain runs to 80 residues: Exodeoxyribonuclease 7 small subunit (80 aa).

The interval 60-80 (LIDSDGTEHNLDPNNASAPEE) is disordered. A compositionally biased stretch (basic and acidic residues) spans 61–70 (IDSDGTEHNL). Residues 71-80 (DPNNASAPEE) are compositionally biased toward polar residues.

The protein belongs to the XseB family. Heterooligomer composed of large and small subunits.

Its subcellular location is the cytoplasm. The catalysed reaction is Exonucleolytic cleavage in either 5'- to 3'- or 3'- to 5'-direction to yield nucleoside 5'-phosphates.. Functionally, bidirectionally degrades single-stranded DNA into large acid-insoluble oligonucleotides, which are then degraded further into small acid-soluble oligonucleotides. In Lactobacillus acidophilus (strain ATCC 700396 / NCK56 / N2 / NCFM), this protein is Exodeoxyribonuclease 7 small subunit.